Here is a 196-residue protein sequence, read N- to C-terminus: Ribonuclease HII (196 aa).

Residues 4 to 196 (IWVCGVDEAG…PVRRVLEGSF (193 aa)) form the RNase H type-2 domain. A divalent metal cation is bound by residues D10, E11, and D106.

It belongs to the RNase HII family. It depends on Mn(2+) as a cofactor. Requires Mg(2+) as cofactor.

It is found in the cytoplasm. It carries out the reaction Endonucleolytic cleavage to 5'-phosphomonoester.. In terms of biological role, endonuclease that specifically degrades the RNA of RNA-DNA hybrids. The chain is Ribonuclease HII from Polynucleobacter asymbioticus (strain DSM 18221 / CIP 109841 / QLW-P1DMWA-1) (Polynucleobacter necessarius subsp. asymbioticus).